A 477-amino-acid chain; its full sequence is D-alanyl-D-alanine carboxypeptidase DacB (477 aa).

An N-terminal signal peptide occupies residues 1–20 (MRFSRFIIGLTSCIAFSVQA). Ser62 serves as the catalytic Acyl-ester intermediate. The Proton acceptor role is filled by Lys65. The interval 90–263 (GNVENGVLKG…YAGAILKDEL (174 aa)) is absent in class-A beta-lactamases. Ser306 is a catalytic residue. Lys417 serves as a coordination point for substrate.

This sequence belongs to the peptidase S13 family.

The protein resides in the periplasm. It catalyses the reaction Preferential cleavage: (Ac)2-L-Lys-D-Ala-|-D-Ala. Also transpeptidation of peptidyl-alanyl moieties that are N-acyl substituents of D-alanine.. It participates in cell wall biogenesis; peptidoglycan biosynthesis. Functionally, not involved in transpeptidation but exclusively catalyzes a DD-carboxypeptidase and DD-endopeptidase reaction. The sequence is that of D-alanyl-D-alanine carboxypeptidase DacB (dacB) from Escherichia coli (strain K12).